The sequence spans 1030 residues: MMS19 nucleotide excision repair protein homolog (1030 aa).

Residue alanine 2 is modified to N-acetylalanine. HEAT repeat units lie at residues glutamine 866–lysine 904, leucine 908–glutamine 946, serine 949–proline 987, and leucine 990–proline 1028. Serine 1027 carries the post-translational modification Phosphoserine.

This sequence belongs to the MET18/MMS19 family. In terms of assembly, component of the CIA complex. In the CIA complex, interacts directly with CIAO2B and CIAO3. Component of the MMXD complex, composed of CIAO1, ERCC2, CIAO2B, MMS19 and SLC25A5. Interacts with CIAO2B; the interaction is direct. Interacts with ERCC2/XPD; the interaction is direct. Interacts with ERCC3/XPB and NCOA3/RAC3. Interacts with RTEL1; the interaction mediates the association of RTEL1 with the CIA complex. Interacts with BRIP1. Interacts with KIF4A; the interaction facilitates the transfer of Fe-S clusters to KIF4A to ensure proper localization of KIF4A to the mitotic machinery components. Interacts with CCDC117; the interaction is indirect. Ubiquitinated; undergoes 'Lys-48'-linked polyubiquitination.

The protein localises to the nucleus. The protein resides in the cytoplasm. Its subcellular location is the cytoskeleton. It is found in the spindle. Its function is as follows. Key component of the cytosolic iron-sulfur protein assembly (CIA) complex, a multiprotein complex that mediates the incorporation of iron-sulfur cluster into apoproteins specifically involved in DNA metabolism and genomic integrity. In the CIA complex, MMS19 acts as an adapter between early-acting CIA components and a subset of cellular target Fe/S proteins such as ERCC2/XPD, FANCJ and RTEL1, thereby playing a key role in nucleotide excision repair (NER), homologous recombination-mediated double-strand break DNA repair, DNA replication and RNA polymerase II (POL II) transcription. As a CIA complex component and in collaboration with CIAO1 and CIAO2, binds to and facilitates the assembly of most cytosolic-nuclear Fe/S proteins. As part of the mitotic spindle-associated MMXD complex, plays a role in chromosome segregation, probably by facilitating iron-sulfur cluster assembly into ERCC2/XPD. Together with CIAO2, facilitates the transfer of Fe-S clusters to the motor protein KIF4A, which ensures proper localization of KIF4A to mitotic machinery components to promote the progression of mitosis. Indirectly acts as a transcriptional coactivator of estrogen receptor (ER), via its role in iron-sulfur insertion into some component of the TFIIH-machinery. The sequence is that of MMS19 nucleotide excision repair protein homolog from Bos taurus (Bovine).